The chain runs to 69 residues: MSRSTFLTLQEGLRRINQPRLLAESSRRRQRLLSLREKANLRKLGWWLKLPLVLQPLNGQPPMKKMIYQ.

This is an uncharacterized protein from Homo sapiens (Human).